A 183-amino-acid polypeptide reads, in one-letter code: Ribosome maturation factor RimM (183 aa).

The 80-residue stretch at 104 to 183 (EGDYYWKDLM…TIEVDWDPGF (80 aa)) folds into the PRC barrel domain.

Belongs to the RimM family. In terms of assembly, binds ribosomal protein uS19.

It is found in the cytoplasm. In terms of biological role, an accessory protein needed during the final step in the assembly of 30S ribosomal subunit, possibly for assembly of the head region. Essential for efficient processing of 16S rRNA. May be needed both before and after RbfA during the maturation of 16S rRNA. It has affinity for free ribosomal 30S subunits but not for 70S ribosomes. This chain is Ribosome maturation factor RimM, found in Salmonella arizonae (strain ATCC BAA-731 / CDC346-86 / RSK2980).